Consider the following 167-residue polypeptide: Small ribosomal subunit protein uS5 (167 aa).

The S5 DRBM domain maps to 12–75 (LQEKLIAVNR…EKARRNMVTV (64 aa)).

The protein belongs to the universal ribosomal protein uS5 family. As to quaternary structure, part of the 30S ribosomal subunit. Contacts proteins S4 and S8.

With S4 and S12 plays an important role in translational accuracy. Its function is as follows. Located at the back of the 30S subunit body where it stabilizes the conformation of the head with respect to the body. The sequence is that of Small ribosomal subunit protein uS5 from Shewanella oneidensis (strain ATCC 700550 / JCM 31522 / CIP 106686 / LMG 19005 / NCIMB 14063 / MR-1).